Here is a 475-residue protein sequence, read N- to C-terminus: Ubiquilin-like protein (475 aa).

In terms of domain architecture, Ubiquitin-like spans 31-105 (TRVIVKTAGN…IYLVIKSKQG (75 aa)). 2 disordered regions span residues 113 to 138 (FRDL…VHQP) and 305 to 325 (QVQS…QLTQ). Positions 129-138 (KGNSSRVHQP) are enriched in polar residues.

The chain is Ubiquilin-like protein (UBQLNL) from Homo sapiens (Human).